Consider the following 452-residue polypeptide: Na(+)/H(+) antiporter NhaA (452 aa).

11 consecutive transmembrane segments (helical) span residues 27 to 47 (FSGIFLFFCAVVAMISANSAL), 67 to 87 (FIGMSLHHWINDVLMSFFFLM), 108 to 128 (AFPAIAALGGMIVPAIVYTLF), 137 to 157 (GFGIPMATDIAFALGVLLLLG), 166 to 186 (VFLVSLAVVDDLGAVVVIAIF), 194 to 214 (LWLLYSVVILGLLIGLNKMGV), 216 to 236 (SLFPYAILGVLLWITVHNCGI), 314 to 334 (PWSAYFIMPVFAFANAGVAIS), 343 to 363 (GVLPGIMLGLIVGKPVGILGL), 381 to 401 (WIDILGAGMLAGIGFTMSIFI), and 414 to 434 (VAKIAILSASLFAGALGYFFI).

Belongs to the NhaA Na(+)/H(+) (TC 2.A.33) antiporter family.

It localises to the cell inner membrane. It catalyses the reaction Na(+)(in) + 2 H(+)(out) = Na(+)(out) + 2 H(+)(in). Its function is as follows. Na(+)/H(+) antiporter that extrudes sodium in exchange for external protons. In Wolinella succinogenes (strain ATCC 29543 / DSM 1740 / CCUG 13145 / JCM 31913 / LMG 7466 / NCTC 11488 / FDC 602W) (Vibrio succinogenes), this protein is Na(+)/H(+) antiporter NhaA.